A 971-amino-acid polypeptide reads, in one-letter code: MELNDANLQTLTEFLRKTLDPDPTVRRPAEKFLESVEGNQNYPLLLLTLLEKSQDNVIRVCAAVTFKNYIKRNWRIVEDEPNKISDPDRTAVKANIVNLMLSSPEQIQKQLSDAISIIGREDFPQKWPDLLTEMVARFRSGDFHIINGVLRTAHSLFKRYRHEFKSNELWSEIKLVLDTFALPLTELFKATIELCQTHATDVNALKVLFSSLTLIAKLFYSLNFQDLPEFFEDNMETWMTNFHGLLTLDNKLLQTDDEEEAGLLELLKSQICDNAALYAQKYDEEFQPYLPRFVTAIWNLLVSTGQEVKYDLLVSNAIQFLASVCERPHYKHLFEDQNTLTSICEKVIVPNMEFRSADEEAFEDNSEEYIRRDLEGSDIDTRRRAACDLVRGLCKFFEGPVTAIFSGYVNSMLSEYAKNPRENWKHKDAAIYLVTSLASKAQTQKHGITQANELVNLTEFFVNHILPDLKSPNVNEFPVLKADAIKYVMIFRSQLPKEQLLQAVPLLITHLQAESTVEHTYAAHALERLFTMRGPNNATLITAAEMAPFTEQLLNNLFKALAFPGSAENEYIMKAIMRSFSLLQESIVPYIPTLIGQLTHKLLQVSKNPSKPHFNHYLFESLCLSVRITCKANPTTVSSFEEALFPVFTEILQNDVQEFLPYVFQVMSLLLEIHSNSIPASYMALFPHLLQPVLWERTGNIPPLVRLLQAYLEKGGETIARSAADKIPGLLGVFQKLIASKANDHQGFYLLNSIIEHMPPESLTQYRKQIFILLFQRLQSSKTTKFIKSFLVFVNLYCVKYGAIALQEIFDSIQPKMFGMVLEKIVIPEVQKVSGPVEKKICAVGITKVLTECPAMMDTEYTKLWTPLLQALIGLFELPEDDSIPDDEHFIDIEDTPGYQTAFSQLAFAGKKEHDPIGDAVGNPKILLAQSLHKLSTACPGRVPSMLSTSLNAEALQFLQGYLQAATVQLV.

The Importin N-terminal domain occupies 29–102 (AEKFLESVEG…KANIVNLMLS (74 aa)).

Belongs to the XPO2/CSE1 family. In terms of assembly, interacts with cftr.

Its subcellular location is the cytoplasm. The protein resides in the nucleus. Functionally, export receptor for importin alpha. Mediates importin-alpha re-export from the nucleus to the cytoplasm after import substrates have been released into the nucleoplasm. Negatively regulates fluid secretion and plays a role in fluid homeostasis by down-regulating cftr activity. The chain is Exportin-2 (cse1l) from Oreochromis niloticus (Nile tilapia).